The sequence spans 89 residues: Cell division topological specificity factor (89 aa).

Belongs to the MinE family.

Prevents the cell division inhibition by proteins MinC and MinD at internal division sites while permitting inhibition at polar sites. This ensures cell division at the proper site by restricting the formation of a division septum at the midpoint of the long axis of the cell. The polypeptide is Cell division topological specificity factor (Edwardsiella ictaluri (strain 93-146)).